The primary structure comprises 434 residues: Adenylosuccinate synthetase (434 aa).

GTP is bound by residues 22 to 28 and 50 to 52; these read GDEGKGK and GHT. Asp-23 acts as the Proton acceptor in catalysis. Asp-23 and Gly-50 together coordinate Mg(2+). IMP contacts are provided by residues 23–26, 48–51, Thr-139, Arg-153, Gln-234, Thr-249, and Arg-313; these read DEGK and NAGH. The active-site Proton donor is the His-51. 309–315 lines the substrate pocket; sequence ATTGRKR. GTP-binding positions include Arg-315, 341–343, and 423–425; these read KLD and SVG.

This sequence belongs to the adenylosuccinate synthetase family. Homodimer. It depends on Mg(2+) as a cofactor.

It is found in the cytoplasm. The enzyme catalyses IMP + L-aspartate + GTP = N(6)-(1,2-dicarboxyethyl)-AMP + GDP + phosphate + 2 H(+). Its pathway is purine metabolism; AMP biosynthesis via de novo pathway; AMP from IMP: step 1/2. Plays an important role in the de novo pathway of purine nucleotide biosynthesis. Catalyzes the first committed step in the biosynthesis of AMP from IMP. In Chlorobium chlorochromatii (strain CaD3), this protein is Adenylosuccinate synthetase.